Here is a 240-residue protein sequence, read N- to C-terminus: MTMPFGYASPEQQVRDKSEYARKGIARGRSVVVLTYENGILFVAENPSATLHKISEIYDRIAFAAVGKYNEFENLRTAGIRLMDSRGYMYDRRDVTSRALANAYAQTLGAIFSESVKPYEVEIVVAEVGTSIADDQIYRLTYDGSIADERGFVAIGGASEQVTTSLKEHHRDGQPLAEALRVAVQALTVGVPPGLPQNGERVLAAANLEVGMLDRTRTRRMFKRIVGPALEGLLAQTSAT.

Belongs to the peptidase T1A family. In terms of assembly, the 20S proteasome core is composed of 14 alpha and 14 beta subunits that assemble into four stacked heptameric rings, resulting in a barrel-shaped structure. The two inner rings, each composed of seven catalytic beta subunits, are sandwiched by two outer rings, each composed of seven alpha subunits. The catalytic chamber with the active sites is on the inside of the barrel. Has a gated structure, the ends of the cylinder being occluded by the N-termini of the alpha-subunits. Is capped by the proteasome-associated ATPase, ARC.

The protein resides in the cytoplasm. Its pathway is protein degradation; proteasomal Pup-dependent pathway. Its activity is regulated as follows. The formation of the proteasomal ATPase ARC-20S proteasome complex, likely via the docking of the C-termini of ARC into the intersubunit pockets in the alpha-rings, may trigger opening of the gate for substrate entry. Interconversion between the open-gate and close-gate conformations leads to a dynamic regulation of the 20S proteasome proteolysis activity. Its function is as follows. Component of the proteasome core, a large protease complex with broad specificity involved in protein degradation. This is Proteasome subunit alpha from Frankia casuarinae (strain DSM 45818 / CECT 9043 / HFP020203 / CcI3).